The sequence spans 425 residues: Probable mannosyltransferase KTR2 (425 aa).

Over 1 to 13 the chain is Cytoplasmic; that stretch reads MQICKVFLTQVKK. A helical; Signal-anchor for type II membrane protein membrane pass occupies residues 14–33; sequence LLFVSLLFCLIAQTCWLALV. A stem region region spans residues 34–89; sequence PYQRQLSLDSYFFRRSREVSSRYDFTRRRHMNQTLKLSSNTYNDEPLNKTKGIKNQ. Residues 34–425 are Lumenal-facing; it reads PYQRQLSLDS…SGKYFLKHDS (392 aa). N65, N81, N92, and N167 each carry an N-linked (GlcNAc...) asparagine glycan. Residues 90–425 form a catalytic region; it reads RENATLLMLV…SGKYFLKHDS (336 aa). The active-site Nucleophile is E313.

It belongs to the glycosyltransferase 15 family.

The protein localises to the golgi apparatus membrane. It functions in the pathway protein modification; protein glycosylation. Involved in N-linked glycosylation. Transfers an alpha-D-mannosyl residue from GDP-mannose into lipid-linked oligosaccharide, forming an alpha-(1-&gt;2)-D-mannosyl-D-mannose linkage. This is Probable mannosyltransferase KTR2 (KTR2) from Saccharomyces cerevisiae (strain ATCC 204508 / S288c) (Baker's yeast).